A 307-amino-acid chain; its full sequence is Holliday junction branch migration complex subunit RuvB (307 aa).

Positions 1-167 (MKLQIKPPNN…FGMILNIDYY (167 aa)) are large ATPase domain (RuvB-L). Residues I5, G48, K51, T52, T53, 114 to 116 (DDF), R157, Y167, and R204 each bind ATP. T52 contacts Mg(2+). Positions 168-233 (SNQEIERIVS…DLAALFKSLM (66 aa)) are small ATPAse domain (RuvB-S). The tract at residues 236–307 (KNGLQSIDVQ…RTGRNYLTSC (72 aa)) is head domain (RuvB-H). K289 and R294 together coordinate DNA.

It belongs to the RuvB family. Homohexamer. Forms an RuvA(8)-RuvB(12)-Holliday junction (HJ) complex. HJ DNA is sandwiched between 2 RuvA tetramers; dsDNA enters through RuvA and exits via RuvB. An RuvB hexamer assembles on each DNA strand where it exits the tetramer. Each RuvB hexamer is contacted by two RuvA subunits (via domain III) on 2 adjacent RuvB subunits; this complex drives branch migration. In the full resolvosome a probable DNA-RuvA(4)-RuvB(12)-RuvC(2) complex forms which resolves the HJ.

It localises to the cytoplasm. It catalyses the reaction ATP + H2O = ADP + phosphate + H(+). The RuvA-RuvB-RuvC complex processes Holliday junction (HJ) DNA during genetic recombination and DNA repair, while the RuvA-RuvB complex plays an important role in the rescue of blocked DNA replication forks via replication fork reversal (RFR). RuvA specifically binds to HJ cruciform DNA, conferring on it an open structure. The RuvB hexamer acts as an ATP-dependent pump, pulling dsDNA into and through the RuvAB complex. RuvB forms 2 homohexamers on either side of HJ DNA bound by 1 or 2 RuvA tetramers; 4 subunits per hexamer contact DNA at a time. Coordinated motions by a converter formed by DNA-disengaged RuvB subunits stimulates ATP hydrolysis and nucleotide exchange. Immobilization of the converter enables RuvB to convert the ATP-contained energy into a lever motion, pulling 2 nucleotides of DNA out of the RuvA tetramer per ATP hydrolyzed, thus driving DNA branch migration. The RuvB motors rotate together with the DNA substrate, which together with the progressing nucleotide cycle form the mechanistic basis for DNA recombination by continuous HJ branch migration. Branch migration allows RuvC to scan DNA until it finds its consensus sequence, where it cleaves and resolves cruciform DNA. This Mycoplasma pneumoniae (strain ATCC 29342 / M129 / Subtype 1) (Mycoplasmoides pneumoniae) protein is Holliday junction branch migration complex subunit RuvB.